The primary structure comprises 127 residues: NADPH-dependent 7-cyano-7-deazaguanine reductase (127 aa).

Residue Cys40 is the Thioimide intermediate of the active site. The active-site Proton donor is the Asp47. Substrate-binding positions include 62-64 (VEL) and 81-82 (HE).

This sequence belongs to the GTP cyclohydrolase I family. QueF type 1 subfamily.

It is found in the cytoplasm. It catalyses the reaction 7-aminomethyl-7-carbaguanine + 2 NADP(+) = 7-cyano-7-deazaguanine + 2 NADPH + 3 H(+). Its pathway is tRNA modification; tRNA-queuosine biosynthesis. In terms of biological role, catalyzes the NADPH-dependent reduction of 7-cyano-7-deazaguanine (preQ0) to 7-aminomethyl-7-deazaguanine (preQ1). The chain is NADPH-dependent 7-cyano-7-deazaguanine reductase from Campylobacter jejuni subsp. jejuni serotype O:6 (strain 81116 / NCTC 11828).